The following is a 570-amino-acid chain: Phytoene desaturase (570 aa).

Residues 547–567 traverse the membrane as a helical segment; sequence LFQGFLGALVAILLAYYYLVI.

Belongs to the carotenoid/retinoid oxidoreductase family. NAD(+) serves as cofactor.

It is found in the membrane. The catalysed reaction is 15-cis-phytoene + A = all-trans-phytofluene + AH2. The enzyme catalyses all-trans-phytofluene + A = all-trans-zeta-carotene + AH2. It carries out the reaction all-trans-zeta-carotene + A = all-trans-neurosporene + AH2. It catalyses the reaction all-trans-neurosporene + A = all-trans-lycopene + AH2. Its pathway is carotenoid biosynthesis. Its function is as follows. Phytoene desaturase; part of the car gene cluster that mediates the biosynthesis of neurosporaxanthin, a carboxylic apocarotenoid acting as an essential protective pigments and leading to orange pigmentation. Converts phytoene into lycopene via the intermediates phytofluene, zeta-carotene and neurosporene; and further desaturates gamma-carotene into torulene. Neurosporaxanthin is synthesized from geranyl-geranyl pyrophosphate (GGPP) through several enzymatic activities. Phytoene synthase activity performed by the bifunctional enzyme carAR first produces phytoene from geranyl-geranyl pyrophosphate (GGPP). The phytoene dehydrogenase carB then introduces 4 desaturations to lead to lycopene which is substrate of the carotene cyclase activity of carAR that leads to the production of gamma-carotene. CarB then performs a 5th desaturation reaction to yield torulene. Torulene is the substrate of the dioxidase carT that breaks the molecule, removing five carbon atoms to yield beta-apo-4'-carotenal, whereas the aldehyde dehydrogenase carD mediates the last step by converting beta-apo-4'-carotenal into neurosporaxanthin. The protein is Phytoene desaturase of Fusarium fujikuroi (Bakanae and foot rot disease fungus).